A 363-amino-acid chain; its full sequence is Putative transcriptional activator MSA2 (363 aa).

The interval 1–20 is disordered; sequence MVYTTPQQQQRFSSTPQSSH. 2 positions are modified to phosphoserine: serine 157 and serine 292.

In terms of assembly, interacts with transcription complexes SCB-binding factor (SBF) and MCB-binding factor (MBF). Interacts with SWI4.

This chain is Putative transcriptional activator MSA2 (MSA2), found in Saccharomyces cerevisiae (strain ATCC 204508 / S288c) (Baker's yeast).